Reading from the N-terminus, the 1410-residue chain is Endoribonuclease Dicer homolog 2a (1410 aa).

Residues 1-15 (MGGPLTAAGGRGDGG) show a composition bias toward gly residues. Positions 1 to 30 (MGGPLTAAGGRGDGGAKAVEPLRPPPPPDP) are disordered. The Helicase ATP-binding domain maps to 41–222 (ALERAVRGNT…HNYSKQISEI (182 aa)). 54–61 (LETGSGKT) serves as a coordination point for ATP. The DECH box signature appears at 163 to 166 (DECH). One can recognise a Helicase C-terminal domain in the interval 388–561 (TLLQYRHMQD…DTYYRVESTR (174 aa)). Positions 569–655 (SVPLIHFFCS…LPELDVPCDE (87 aa)) constitute a Dicer dsRNA-binding fold domain. Positions 827 to 942 (KDIDLLQTKD…LPPELCRIIM (116 aa)) constitute a PAZ domain. RNase III domains are found at residues 969–1124 (SVKL…STAG) and 1161–1308 (VRSL…LDSK). Glu1200, Asp1294, and Glu1297 together coordinate Mg(2+). The DRBM domain maps to 1334 to 1400 (DPVKGLQEFC…SKAVLKDLIA (67 aa)).

This sequence belongs to the helicase family. Dicer subfamily. May interact with ARGONAUTE1 or PINHEAD through their common PAZ domains. Mg(2+) is required as a cofactor. Requires Mn(2+) as cofactor.

It localises to the nucleus. In terms of biological role, probably involved in the RNA silencing pathway. May cleave double-stranded RNA to produce short 21-24 nucleotides (nt) RNAs which target the selective destruction of complementary RNAs. This Oryza sativa subsp. japonica (Rice) protein is Endoribonuclease Dicer homolog 2a (DCL2A).